The sequence spans 274 residues: Hydroxyethylthiazole kinase (274 aa).

M51 is a binding site for substrate. ATP contacts are provided by R127 and S173. G200 contributes to the substrate binding site.

The protein belongs to the Thz kinase family. The cofactor is Mg(2+).

The catalysed reaction is 5-(2-hydroxyethyl)-4-methylthiazole + ATP = 4-methyl-5-(2-phosphooxyethyl)-thiazole + ADP + H(+). It participates in cofactor biosynthesis; thiamine diphosphate biosynthesis; 4-methyl-5-(2-phosphoethyl)-thiazole from 5-(2-hydroxyethyl)-4-methylthiazole: step 1/1. In terms of biological role, catalyzes the phosphorylation of the hydroxyl group of 4-methyl-5-beta-hydroxyethylthiazole (THZ). This is Hydroxyethylthiazole kinase from Photobacterium profundum (strain SS9).